The following is a 256-amino-acid chain: UPF0246 protein Bpet1601 (256 aa).

This sequence belongs to the UPF0246 family.

This chain is UPF0246 protein Bpet1601, found in Bordetella petrii (strain ATCC BAA-461 / DSM 12804 / CCUG 43448).